The following is a 126-amino-acid chain: C-type natriuretic peptide 1 (126 aa).

The N-terminal stretch at 1–22 (MLCPALLCAALLLLTPVEITDA) is a signal peptide. The propeptide occupies 23 to 104 (RALQQPSDAA…KRAEPDRSRR (82 aa)). Residues C110 and C126 are joined by a disulfide bond.

This sequence belongs to the natriuretic peptide family.

Its subcellular location is the secreted. Functionally, exhibits natriuretic and vasodepressant activity. Has cGMP-stimulating activity. May help to regulate body fluid homeostasis in a variety of aquatic environments. This chain is C-type natriuretic peptide 1, found in Takifugu rubripes (Japanese pufferfish).